The chain runs to 419 residues: UDP-N-acetylglucosamine 1-carboxyvinyltransferase (419 aa).

Residue 22-23 coordinates phosphoenolpyruvate; the sequence is KN. Residue Arg-93 coordinates UDP-N-acetyl-alpha-D-glucosamine. Cys-117 (proton donor) is an active-site residue. A 2-(S-cysteinyl)pyruvic acid O-phosphothioketal modification is found at Cys-117. Asp-306 and Ile-328 together coordinate UDP-N-acetyl-alpha-D-glucosamine.

Belongs to the EPSP synthase family. MurA subfamily.

It localises to the cytoplasm. It carries out the reaction phosphoenolpyruvate + UDP-N-acetyl-alpha-D-glucosamine = UDP-N-acetyl-3-O-(1-carboxyvinyl)-alpha-D-glucosamine + phosphate. Its pathway is cell wall biogenesis; peptidoglycan biosynthesis. Its function is as follows. Cell wall formation. Adds enolpyruvyl to UDP-N-acetylglucosamine. This chain is UDP-N-acetylglucosamine 1-carboxyvinyltransferase, found in Ruthia magnifica subsp. Calyptogena magnifica.